We begin with the raw amino-acid sequence, 301 residues long: Amylovoran biosynthesis glycosyltransferase AmsB (301 aa).

Belongs to the glycosyltransferase 2 family.

It participates in glycan metabolism; exopolysaccharide biosynthesis. Functionally, involved in the biosynthesis of amylovoran, which functions as a virulence factor. May function as a glycosyl transferase which transfers galactose from UDP-galactose to a lipid-linked amylovoran-subunit precursor. The protein is Amylovoran biosynthesis glycosyltransferase AmsB (amsB) of Erwinia amylovora (Fire blight bacteria).